Reading from the N-terminus, the 515-residue chain is Anterior pharynx in excess protein 1 (515 aa).

A signal peptide spans Met1–Glu26. At Leu27–Leu392 the chain is on the extracellular side. Residue Asn123 is glycosylated (N-linked (GlcNAc...) asparagine). The DSL domain maps to Asn130–Cys172. 14 disulfide bridges follow: Cys132–Cys141, Cys145–Cys155, Cys163–Cys172, Cys177–Cys187, Cys181–Cys193, Cys195–Cys204, Cys213–Cys218, Cys228–Cys237, Cys244–Cys256, Cys250–Cys268, Cys270–Cys279, Cys288–Cys300, Cys294–Cys310, and Cys312–Cys321. 4 EGF-like domains span residues Ser173 to Glu205, Arg203 to Asp238, Asp240 to Lys280, and Ser284 to Glu322. N-linked (GlcNAc...) asparagine glycosylation is present at Asn200. The region spanning Asn325–Cys349 is the EGF-like 5; incomplete domain. Residues Ile393 to Phe413 traverse the membrane as a helical segment. The Cytoplasmic portion of the chain corresponds to Phe414–Val515. Disordered regions lie at residues Ser427–Gly452 and Arg466–Tyr494. Residues Gly431 to Gly452 are compositionally biased toward low complexity.

Its subcellular location is the cell membrane. It is found in the nucleus. It localises to the cytoplasm. Probable ligand for lin-12/Notch and glp-1/Notch receptors and involved in the mediation of Notch signaling. Involved in the lin-12/Notch pathway signaling of cell fate in vulval precursor cells (VPCs), acting redundantly with dsl-1 and lag-2. Contributes to the establishment of the dorsal-ventral axis in early embryos. Involved in the specification of the blastomere cell ABp fate, probably acting as a signal from the P2 blastomere to the glp-1/Notch receptor on ABp and ABa. Probably acts as a signal, from the secondary vulval epithelial cells and the vulval muscle type 1 (vm1) cells, to activate the lin-12/Notch pathway in type 2 vulval muscle (vm2) cells, contributing to formation of the postsynaptic muscle plasma membrane extensions, known as muscle arms. Required for oocyte growth control, acting redundantly with lag-2, perhaps signaling via the glp-1/Notch pathway. Plays a somatic role in ovulation during adulthood, perhaps via lin-12/Notch signaling. Involved in establishing left-right asymmetry during intestinal organogenesis. This is Anterior pharynx in excess protein 1 (apx-1) from Caenorhabditis elegans.